A 243-amino-acid chain; its full sequence is LexA repressor (243 aa).

The disordered stretch occupies residues 1–30; that stretch reads MSDDTGEFTDGSTESPADADGAGRRRAVDN. The segment covering 21-30 has biased composition (basic and acidic residues); it reads GAGRRRAVDN. The H-T-H motif DNA-binding region spans 56-76; it reads IREIGDAVGLTSTSSVAHQLR. Residues S167 and K204 each act as for autocatalytic cleavage activity in the active site.

Belongs to the peptidase S24 family. As to quaternary structure, homodimer.

It carries out the reaction Hydrolysis of Ala-|-Gly bond in repressor LexA.. Functionally, represses a number of genes involved in the response to DNA damage (SOS response), including recA and lexA. In the presence of single-stranded DNA, RecA interacts with LexA causing an autocatalytic cleavage which disrupts the DNA-binding part of LexA, leading to derepression of the SOS regulon and eventually DNA repair. The protein is LexA repressor of Mycolicibacterium smegmatis (strain ATCC 700084 / mc(2)155) (Mycobacterium smegmatis).